The primary structure comprises 131 residues: Ribosome-binding factor A (131 aa).

The protein belongs to the RbfA family. As to quaternary structure, monomer. Binds 30S ribosomal subunits, but not 50S ribosomal subunits or 70S ribosomes.

It is found in the cytoplasm. In terms of biological role, one of several proteins that assist in the late maturation steps of the functional core of the 30S ribosomal subunit. Associates with free 30S ribosomal subunits (but not with 30S subunits that are part of 70S ribosomes or polysomes). Required for efficient processing of 16S rRNA. May interact with the 5'-terminal helix region of 16S rRNA. This Picosynechococcus sp. (strain ATCC 27264 / PCC 7002 / PR-6) (Agmenellum quadruplicatum) protein is Ribosome-binding factor A.